A 261-amino-acid polypeptide reads, in one-letter code: 14-3-3-like protein GF14-12 (261 aa).

It belongs to the 14-3-3 family.

Functionally, is associated with a DNA binding complex to bind to the G box, a well-characterized cis-acting DNA regulatory element found in plant genes. This is 14-3-3-like protein GF14-12 (GRF2) from Zea mays (Maize).